Reading from the N-terminus, the 339-residue chain is Glycerol-3-phosphate dehydrogenase [NAD(P)+] (339 aa).

NADPH contacts are provided by S15, Y16, H36, and K110. K110, G139, and T141 together coordinate sn-glycerol 3-phosphate. A143 serves as a coordination point for NADPH. The sn-glycerol 3-phosphate site is built by K195, D248, S258, R259, and N260. The active-site Proton acceptor is K195. R259 is a binding site for NADPH. NADPH is bound by residues V283 and E285.

This sequence belongs to the NAD-dependent glycerol-3-phosphate dehydrogenase family.

The protein resides in the cytoplasm. The catalysed reaction is sn-glycerol 3-phosphate + NAD(+) = dihydroxyacetone phosphate + NADH + H(+). It catalyses the reaction sn-glycerol 3-phosphate + NADP(+) = dihydroxyacetone phosphate + NADPH + H(+). It functions in the pathway membrane lipid metabolism; glycerophospholipid metabolism. In terms of biological role, catalyzes the reduction of the glycolytic intermediate dihydroxyacetone phosphate (DHAP) to sn-glycerol 3-phosphate (G3P), the key precursor for phospholipid synthesis. In Escherichia coli O17:K52:H18 (strain UMN026 / ExPEC), this protein is Glycerol-3-phosphate dehydrogenase [NAD(P)+].